The following is a 329-amino-acid chain: Sex comb on midleg-like protein 1 (329 aa).

The tract at residues Asn125–Pro194 is disordered. A Phosphoserine modification is found at Ser138. A compositionally biased stretch (basic and acidic residues) spans Phe159–Glu168. Ser238 is modified (phosphoserine). Positions Trp258–Lys325 constitute an SAM domain.

This sequence belongs to the SCM family. Highly expressed in testis and pancreas. Preferentially expressed in the germ stem cells of testis.

It is found in the nucleus. Putative Polycomb group (PcG) protein. PcG proteins act by forming multiprotein complexes, which are required to maintain the transcriptionally repressive state of homeotic genes throughout development. May be involved in spermatogenesis during sexual maturation. This Macaca mulatta (Rhesus macaque) protein is Sex comb on midleg-like protein 1 (SCML1).